Here is an 802-residue protein sequence, read N- to C-terminus: Nuclear polyadenylated RNA-binding protein 3 (802 aa).

Disordered stretches follow at residues 1–174 (MSDE…RRET) and 252–293 (ALSV…RMRF). The segment covering 22–34 (SNSNENELMNNSS) has biased composition (low complexity). Positions 37 to 73 (DGIEFDAPEEEREAEREEENEEQHELEDVNDEEEEDK) are enriched in acidic residues. Threonine 86 bears the Phosphothreonine mark. 2 stretches are compositionally biased toward acidic residues: residues 101 to 139 (DDDDDDNEEEEEEEEDDDDDDDDDDDDEEEEEEEEEEGN) and 149 to 158 (AAEDGEDEED). Residues 159-174 (KKDKTKDKEVELRRET) show a composition bias toward basic and acidic residues. Residues 260–276 (STISTTASASATSGARS) are compositionally biased toward low complexity. Residues 277–293 (NDQRKPPLSDAQRRMRF) show a composition bias toward basic and acidic residues. The 72-residue stretch at 330-401 (SRLFIGNLPL…KKLILEVSSS (72 aa)) folds into the RRM domain. Threonine 451 is modified (phosphothreonine). 2 disordered regions span residues 571-675 (IYGA…PMDQ) and 717-802 (MQGQ…KLQK). Pro residues predominate over residues 575–590 (PPLPVPNGPAVGPPPQ). Low complexity predominate over residues 593–614 (YYQGYSMPPPQQQQQQPYGNYG). The segment covering 632–642 (MNQSYGRYQTS) has biased composition (polar residues). Low complexity-rich tracts occupy residues 651–661 (QIPQGYGRYQA) and 717–738 (MQGQAPQQQQQQLGGYSSMNSS). The span at 745–754 (TNYNGQNISA) shows a compositional bias: polar residues. The segment covering 757–769 (SAPPMSHQPPPPQ) has biased composition (pro residues). The span at 770–785 (QQQQQQQQQQQQQQQP) shows a compositional bias: low complexity.

The protein resides in the nucleus. It localises to the nucleoplasm. In terms of biological role, may be required for packaging pre-mRNAs into ribonucleoprotein structures amenable to efficient nuclear RNA processing. Binds to poly(A)+ RNA. Appears to act in the maintenance of CLN3 mRNA levels. The chain is Nuclear polyadenylated RNA-binding protein 3 (NAB3) from Saccharomyces cerevisiae (strain ATCC 204508 / S288c) (Baker's yeast).